We begin with the raw amino-acid sequence, 435 residues long: E3 ubiquitin-protein ligase itt1 (435 aa).

In terms of domain architecture, RWD spans 16–135; sequence DELIALQSIY…EHVRSIATIA (120 aa). Positions 170–420 are TRIAD supradomain; the sequence is RKFQCNVCFD…DPVSSCYGML (251 aa). Zn(2+)-binding residues include Cys-174, Cys-177, Cys-192, His-194, Cys-197, Cys-200, Cys-219, Cys-224, Cys-266, Cys-271, Cys-286, Cys-289, Cys-294, Cys-297, His-302, Cys-308, Cys-368, and Cys-371. The segment at 174–224 adopts an RING-type 1 zinc-finger fold; the sequence is CNVCFDEFNGTDCFQLTRCGHVSCQSCLRDYYTMCIQEGMFSQIKCIDLDC. The IBR-type zinc finger occupies 245-308; the sequence is TNRYKELEEK…ATWHGDLSPC (64 aa). The segment at 368–396 adopts an RING-type 2; atypical zinc-finger fold; it reads CPTCDRVVERIDGCCHMNCLCGTHFCFLC. The active site involves Cys-381. Residues Cys-386, Cys-388, Cys-393, Cys-396, His-408, and Cys-416 each contribute to the Zn(2+) site.

The protein belongs to the RBR family. RNF14 subfamily.

The protein localises to the cytoplasm. It localises to the nucleus. It carries out the reaction [E2 ubiquitin-conjugating enzyme]-S-ubiquitinyl-L-cysteine + [acceptor protein]-L-lysine = [E2 ubiquitin-conjugating enzyme]-L-cysteine + [acceptor protein]-N(6)-ubiquitinyl-L-lysine.. It functions in the pathway protein modification; protein ubiquitination. Functionally, E3 ubiquitin-protein ligase involved in the rescue of stalled ribosomes by promoting ubiquitination and degradation of proteins on stalled ribosomes. Specifically required to resolve RNA-protein cross-links caused by reactive aldehydes, which trigger translation stress by stalling ribosomes: acts by catalying 'Lys-6'-linked ubiquitination of RNA-protein cross-links, leading to their degradation. This Schizosaccharomyces pombe (strain 972 / ATCC 24843) (Fission yeast) protein is E3 ubiquitin-protein ligase itt1 (itt1).